Reading from the N-terminus, the 39-residue chain is ORF8a protein (39 aa).

The signal sequence occupies residues 1 to 15 (MKLLIVLTCISLCSC). An SARS ORF8 Ig-like domain is found at 16-39 (ICTVVQRCASNKPHVLEDPCKVQH).

The polypeptide is ORF8a protein (Homo sapiens (Human)).